A 360-amino-acid polypeptide reads, in one-letter code: S-adenosylmethionine:tRNA ribosyltransferase-isomerase (360 aa).

This sequence belongs to the QueA family. As to quaternary structure, monomer.

It is found in the cytoplasm. The catalysed reaction is 7-aminomethyl-7-carbaguanosine(34) in tRNA + S-adenosyl-L-methionine = epoxyqueuosine(34) in tRNA + adenine + L-methionine + 2 H(+). The protein operates within tRNA modification; tRNA-queuosine biosynthesis. In terms of biological role, transfers and isomerizes the ribose moiety from AdoMet to the 7-aminomethyl group of 7-deazaguanine (preQ1-tRNA) to give epoxyqueuosine (oQ-tRNA). The chain is S-adenosylmethionine:tRNA ribosyltransferase-isomerase from Sinorhizobium medicae (strain WSM419) (Ensifer medicae).